The chain runs to 338 residues: GTPase Obg (338 aa).

In terms of domain architecture, Obg spans 1–159; that stretch reads MSFIDEVKIH…RWLRLELKLM (159 aa). Residues 160 to 331 form the OBG-type G domain; the sequence is ADVGLLGMPS…LLDEIARNLW (172 aa). GTP contacts are provided by residues 166–173, 191–195, 213–216, 283–286, and 312–314; these read GMPSVGKS, FTTLK, DIPG, NKID, and SAA. Mg(2+) is bound by residues Ser-173 and Thr-193.

It belongs to the TRAFAC class OBG-HflX-like GTPase superfamily. OBG GTPase family. In terms of assembly, monomer. Requires Mg(2+) as cofactor.

Its subcellular location is the cytoplasm. Its function is as follows. An essential GTPase which binds GTP, GDP and possibly (p)ppGpp with moderate affinity, with high nucleotide exchange rates and a fairly low GTP hydrolysis rate. Plays a role in control of the cell cycle, stress response, ribosome biogenesis and in those bacteria that undergo differentiation, in morphogenesis control. The protein is GTPase Obg of Geotalea uraniireducens (strain Rf4) (Geobacter uraniireducens).